A 119-amino-acid chain; its full sequence is Ribonuclease P protein component (119 aa).

This sequence belongs to the RnpA family. Consists of a catalytic RNA component (M1 or rnpB) and a protein subunit.

It carries out the reaction Endonucleolytic cleavage of RNA, removing 5'-extranucleotides from tRNA precursor.. Functionally, RNaseP catalyzes the removal of the 5'-leader sequence from pre-tRNA to produce the mature 5'-terminus. It can also cleave other RNA substrates such as 4.5S RNA. The protein component plays an auxiliary but essential role in vivo by binding to the 5'-leader sequence and broadening the substrate specificity of the ribozyme. This chain is Ribonuclease P protein component, found in Dictyoglomus turgidum (strain DSM 6724 / Z-1310).